The primary structure comprises 181 residues: Mitochondrial pyruvate carrier-like protein (181 aa).

Helical transmembrane passes span 23 to 42 (YLASTHFWGPVANWGLPLAA) and 52 to 74 (IISGRMTTALIFYSMAFMRFAYR). The tract at residues 125–154 (TGSVDSSATSTGSVDSSATSTGSVDSSAAT) is disordered.

This sequence belongs to the mitochondrial pyruvate carrier (MPC) (TC 2.A.105) family.

It is found in the mitochondrion inner membrane. May mediate the uptake of pyruvate into mitochondria. This chain is Mitochondrial pyruvate carrier-like protein, found in Bos taurus (Bovine).